The chain runs to 188 residues: Protease-associated domain-containing protein 1 (188 aa).

A signal peptide spans 1 to 21 (MSRGAAGWCCLVLWLPTCVAA). In terms of domain architecture, PA spans 83–163 (IQDQIALVER…RSLEQHGLPW (81 aa)). 2 N-linked (GlcNAc...) asparagine glycosylation sites follow: N121 and N171.

Post-translationally, N-glycosylated; required for efficient secretion. In terms of tissue distribution, expressed in metabolically active tissues such as liver, muscle, adipose, and heart and different brain regions like cortex and hypothalamus, expression is acutely regulated by the nutritional state.

The protein resides in the secreted. Its function is as follows. Plays a role in the modulation of physical activity and adiposity. The sequence is that of Protease-associated domain-containing protein 1 from Mus musculus (Mouse).